The chain runs to 455 residues: Phosphomethylpyrimidine synthase (455 aa).

Residues asparagine 80, methionine 109, tyrosine 139, histidine 175, 195 to 197 (SRG), 236 to 239 (DALR), and glutamate 275 contribute to the substrate site. Residue histidine 279 participates in Zn(2+) binding. Position 302 (tyrosine 302) interacts with substrate. Histidine 343 contacts Zn(2+). [4Fe-4S] cluster-binding residues include cysteine 423, cysteine 426, and cysteine 431.

This sequence belongs to the ThiC family. The cofactor is [4Fe-4S] cluster.

The enzyme catalyses 5-amino-1-(5-phospho-beta-D-ribosyl)imidazole + S-adenosyl-L-methionine = 4-amino-2-methyl-5-(phosphooxymethyl)pyrimidine + CO + 5'-deoxyadenosine + formate + L-methionine + 3 H(+). It participates in cofactor biosynthesis; thiamine diphosphate biosynthesis. Catalyzes the synthesis of the hydroxymethylpyrimidine phosphate (HMP-P) moiety of thiamine from aminoimidazole ribotide (AIR) in a radical S-adenosyl-L-methionine (SAM)-dependent reaction. The sequence is that of Phosphomethylpyrimidine synthase from Synechococcus sp. (strain JA-3-3Ab) (Cyanobacteria bacterium Yellowstone A-Prime).